The primary structure comprises 435 residues: Serine hydroxymethyltransferase (435 aa).

(6S)-5,6,7,8-tetrahydrofolate is bound by residues leucine 133 and 137 to 139 (GHL). Position 242 is an N6-(pyridoxal phosphate)lysine (lysine 242).

The protein belongs to the SHMT family. As to quaternary structure, homodimer. Requires pyridoxal 5'-phosphate as cofactor.

Its subcellular location is the cytoplasm. It catalyses the reaction (6R)-5,10-methylene-5,6,7,8-tetrahydrofolate + glycine + H2O = (6S)-5,6,7,8-tetrahydrofolate + L-serine. It functions in the pathway one-carbon metabolism; tetrahydrofolate interconversion. The protein operates within amino-acid biosynthesis; glycine biosynthesis; glycine from L-serine: step 1/1. In terms of biological role, catalyzes the reversible interconversion of serine and glycine with tetrahydrofolate (THF) serving as the one-carbon carrier. This reaction serves as the major source of one-carbon groups required for the biosynthesis of purines, thymidylate, methionine, and other important biomolecules. Also exhibits THF-independent aldolase activity toward beta-hydroxyamino acids, producing glycine and aldehydes, via a retro-aldol mechanism. This chain is Serine hydroxymethyltransferase, found in Sphingopyxis alaskensis (strain DSM 13593 / LMG 18877 / RB2256) (Sphingomonas alaskensis).